A 1185-amino-acid polypeptide reads, in one-letter code: DNA-directed RNA polymerase subunit beta' (1185 aa).

The Zn(2+) site is built by C60, C62, C75, and C78. Mg(2+)-binding residues include D449, D451, and D453. Zn(2+) is bound by residues C774, C853, C860, and C863.

It belongs to the RNA polymerase beta' chain family. As to quaternary structure, the RNAP catalytic core consists of 2 alpha, 1 beta, 1 beta' and 1 omega subunit. When a sigma factor is associated with the core the holoenzyme is formed, which can initiate transcription. The cofactor is Mg(2+). It depends on Zn(2+) as a cofactor.

The enzyme catalyses RNA(n) + a ribonucleoside 5'-triphosphate = RNA(n+1) + diphosphate. DNA-dependent RNA polymerase catalyzes the transcription of DNA into RNA using the four ribonucleoside triphosphates as substrates. This Desulforamulus reducens (strain ATCC BAA-1160 / DSM 100696 / MI-1) (Desulfotomaculum reducens) protein is DNA-directed RNA polymerase subunit beta'.